The primary structure comprises 346 residues: Peroxidase 9 (346 aa).

Positions 1–23 are cleaved as a signal peptide; that stretch reads MAISKLIPTLVLFVLFSFDVSVA. 4 cysteine pairs are disulfide-bonded: Cys54/Cys134, Cys87/Cys92, Cys140/Cys342, and Cys219/Cys251. Catalysis depends on His85, which acts as the Proton acceptor. Residues Asp86, Val89, Gly91, Asp93, and Ser95 each coordinate Ca(2+). Pro182 contacts substrate. Asn185 carries an N-linked (GlcNAc...) asparagine glycan. His212 contacts heme b. Residue Thr213 coordinates Ca(2+). Ca(2+) contacts are provided by Asp264, Ser267, and Asp272.

It belongs to the peroxidase family. Classical plant (class III) peroxidase subfamily. Heme b is required as a cofactor. The cofactor is Ca(2+).

The protein resides in the secreted. The enzyme catalyses 2 a phenolic donor + H2O2 = 2 a phenolic radical donor + 2 H2O. Its function is as follows. Removal of H(2)O(2), oxidation of toxic reductants, biosynthesis and degradation of lignin, suberization, auxin catabolism, response to environmental stresses such as wounding, pathogen attack and oxidative stress. These functions might be dependent on each isozyme/isoform in each plant tissue. The chain is Peroxidase 9 (PER9) from Arabidopsis thaliana (Mouse-ear cress).